The chain runs to 84 residues: Beta-defensin 119 (84 aa).

The first 21 residues, 1–21 (MKLLYLFLAILLAIEEPVISG), serve as a signal peptide directing secretion. 3 cysteine pairs are disulfide-bonded: C28/C55, C35/C49, and C39/C56.

Belongs to the beta-defensin family.

The protein resides in the secreted. Its function is as follows. Has antibacterial activity. This Hylobates lar (Lar gibbon) protein is Beta-defensin 119 (DEFB119).